The sequence spans 394 residues: D-mannose isomerase (394 aa).

Active-site proton donor/acceptor residues include histidine 251 and histidine 380.

The protein belongs to the N-acylglucosamine 2-epimerase family. Monomer.

The catalysed reaction is D-mannose = D-fructose. It catalyses the reaction D-lyxose = D-xylulose. Catalyzes the reversible isomerization of D-mannose to D-fructose. Can also isomerize D-lyxose, with lower efficiency. In longer reaction with a higher concentration of enzyme, it can isomerize 4-OH D-mannose derivatives (D-talose and 4-O-monosaccharyl-D-mannose). Cannot use D-glucose. This chain is D-mannose isomerase, found in Marinomonas mediterranea (strain ATCC 700492 / JCM 21426 / NBRC 103028 / MMB-1).